We begin with the raw amino-acid sequence, 328 residues long: Ribosomal protein L11 methyltransferase (328 aa).

Positions 158, 180, 202, and 246 each coordinate S-adenosyl-L-methionine.

The protein belongs to the methyltransferase superfamily. PrmA family.

Its subcellular location is the cytoplasm. The catalysed reaction is L-lysyl-[protein] + 3 S-adenosyl-L-methionine = N(6),N(6),N(6)-trimethyl-L-lysyl-[protein] + 3 S-adenosyl-L-homocysteine + 3 H(+). Methylates ribosomal protein L11. In Polynucleobacter necessarius subsp. necessarius (strain STIR1), this protein is Ribosomal protein L11 methyltransferase.